The primary structure comprises 324 residues: Glyoxylate/hydroxypyruvate reductase B (324 aa).

Catalysis depends on residues R237 and E266. H285 functions as the Proton donor in the catalytic mechanism.

It belongs to the D-isomer specific 2-hydroxyacid dehydrogenase family. GhrB subfamily. Homodimer.

It localises to the cytoplasm. The enzyme catalyses glycolate + NADP(+) = glyoxylate + NADPH + H(+). The catalysed reaction is (R)-glycerate + NAD(+) = 3-hydroxypyruvate + NADH + H(+). It carries out the reaction (R)-glycerate + NADP(+) = 3-hydroxypyruvate + NADPH + H(+). Catalyzes the NADPH-dependent reduction of glyoxylate and hydroxypyruvate into glycolate and glycerate, respectively. The chain is Glyoxylate/hydroxypyruvate reductase B from Salmonella heidelberg (strain SL476).